The chain runs to 268 residues: Energy-coupling factor transporter transmembrane protein EcfT (268 aa).

5 helical membrane passes run Phe-28–Val-48, Leu-63–Met-83, Ile-107–Met-127, Leu-152–Met-172, and Ile-248–Val-268.

Belongs to the energy-coupling factor EcfT family. Forms a stable energy-coupling factor (ECF) transporter complex composed of 2 membrane-embedded substrate-binding proteins (S component), 2 ATP-binding proteins (A component) and 2 transmembrane proteins (T component). May be able to interact with more than 1 S component at a time.

Its subcellular location is the cell membrane. Functionally, transmembrane (T) component of an energy-coupling factor (ECF) ABC-transporter complex. Unlike classic ABC transporters this ECF transporter provides the energy necessary to transport a number of different substrates. In Staphylococcus aureus (strain 04-02981), this protein is Energy-coupling factor transporter transmembrane protein EcfT.